The chain runs to 145 residues: D-aminoacyl-tRNA deacylase (145 aa).

The Gly-cisPro motif, important for rejection of L-amino acids motif lies at 137–138 (GP).

This sequence belongs to the DTD family. Homodimer.

The protein localises to the cytoplasm. It catalyses the reaction glycyl-tRNA(Ala) + H2O = tRNA(Ala) + glycine + H(+). The enzyme catalyses a D-aminoacyl-tRNA + H2O = a tRNA + a D-alpha-amino acid + H(+). An aminoacyl-tRNA editing enzyme that deacylates mischarged D-aminoacyl-tRNAs. Also deacylates mischarged glycyl-tRNA(Ala), protecting cells against glycine mischarging by AlaRS. Acts via tRNA-based rather than protein-based catalysis; rejects L-amino acids rather than detecting D-amino acids in the active site. By recycling D-aminoacyl-tRNA to D-amino acids and free tRNA molecules, this enzyme counteracts the toxicity associated with the formation of D-aminoacyl-tRNA entities in vivo and helps enforce protein L-homochirality. The protein is D-aminoacyl-tRNA deacylase of Lactobacillus helveticus (strain DPC 4571).